The primary structure comprises 126 residues: Small ribosomal subunit protein uS12c (126 aa).

This sequence belongs to the universal ribosomal protein uS12 family. As to quaternary structure, part of the 30S ribosomal subunit.

It localises to the plastid. The protein resides in the chloroplast. Its function is as follows. With S4 and S5 plays an important role in translational accuracy. Located at the interface of the 30S and 50S subunits. In Trieres chinensis (Marine centric diatom), this protein is Small ribosomal subunit protein uS12c (rps12).